The sequence spans 399 residues: Serine palmitoyltransferase (399 aa).

Residues Gly-113 to Phe-114, His-213, Thr-241, and Ser-243 each bind pyridoxal 5'-phosphate. Position 244 is an N6-(pyridoxal phosphate)lysine (Lys-244).

It belongs to the class-II pyridoxal-phosphate-dependent aminotransferase family. In terms of assembly, homodimer. It depends on pyridoxal 5'-phosphate as a cofactor.

Its subcellular location is the cytoplasm. It catalyses the reaction L-serine + hexadecanoyl-CoA + H(+) = 3-oxosphinganine + CO2 + CoA. The protein operates within lipid metabolism; sphingolipid metabolism. Catalyzes the condensation of L-serine with palmitoyl-CoA (hexadecanoyl-CoA) to produce 3-oxosphinganine. The polypeptide is Serine palmitoyltransferase (Sphingobacterium spiritivorum (Flavobacterium spiritivorum)).